The chain runs to 161 residues: Cytochrome c-type biogenesis protein CcmE (161 aa).

Over methionine 1–arginine 8 the chain is Cytoplasmic. The chain crosses the membrane as a helical; Signal-anchor for type II membrane protein span at residues leucine 9 to alanine 29. Over leucine 30–glutamine 161 the chain is Periplasmic. 2 residues coordinate heme: histidine 124 and tyrosine 128.

This sequence belongs to the CcmE/CycJ family.

It is found in the cell inner membrane. Its function is as follows. Heme chaperone required for the biogenesis of c-type cytochromes. Transiently binds heme delivered by CcmC and transfers the heme to apo-cytochromes in a process facilitated by CcmF and CcmH. The sequence is that of Cytochrome c-type biogenesis protein CcmE from Ectopseudomonas mendocina (strain ymp) (Pseudomonas mendocina).